A 341-amino-acid chain; its full sequence is Large ribosomal subunit protein uL3 (341 aa).

2 disordered regions span residues 1-31 (MGHRKLSSPRRGSAGLRPRKRSEELLPSPRS) and 234-261 (HRKGSRKVGTKGPSLGTPSYVPQPGQMG).

It belongs to the universal ribosomal protein uL3 family. In terms of assembly, part of the 50S ribosomal subunit. Forms a cluster with proteins L14 and L24e.

Its function is as follows. One of the primary rRNA binding proteins, it binds directly near the 3'-end of the 23S rRNA, where it nucleates assembly of the 50S subunit. The chain is Large ribosomal subunit protein uL3 from Metallosphaera sedula (strain ATCC 51363 / DSM 5348 / JCM 9185 / NBRC 15509 / TH2).